The primary structure comprises 54 residues: MLLLIPSNHISIKETSSLMVVTPSSRTLFVVIVSFQQRALTSSVPVFLAVKRGR.

The chain crosses the membrane as a helical span at residues L28–V50.

It is found in the cell inner membrane. The sequence is that of Protein GndA from Escherichia coli (strain K12).